A 1272-amino-acid polypeptide reads, in one-letter code: uncharacterized protein (1272 aa).

This is an uncharacterized protein from Methanocaldococcus jannaschii (strain ATCC 43067 / DSM 2661 / JAL-1 / JCM 10045 / NBRC 100440) (Methanococcus jannaschii).